Consider the following 120-residue polypeptide: NAD(P)H-quinone oxidoreductase subunit 3, chloroplastic (120 aa).

3 helical membrane passes run 9 to 29 (IFWAFLIISSLIPILAFLISG), 64 to 84 (MFALVFVVFDVETVFLYPWAM), and 88 to 108 (VLGVSVFIEALIFVLIPIIGS).

The protein belongs to the complex I subunit 3 family. As to quaternary structure, NDH is composed of at least 16 different subunits, 5 of which are encoded in the nucleus.

The protein localises to the plastid. It localises to the chloroplast thylakoid membrane. The enzyme catalyses a plastoquinone + NADH + (n+1) H(+)(in) = a plastoquinol + NAD(+) + n H(+)(out). It catalyses the reaction a plastoquinone + NADPH + (n+1) H(+)(in) = a plastoquinol + NADP(+) + n H(+)(out). NDH shuttles electrons from NAD(P)H:plastoquinone, via FMN and iron-sulfur (Fe-S) centers, to quinones in the photosynthetic chain and possibly in a chloroplast respiratory chain. The immediate electron acceptor for the enzyme in this species is believed to be plastoquinone. Couples the redox reaction to proton translocation, and thus conserves the redox energy in a proton gradient. The chain is NAD(P)H-quinone oxidoreductase subunit 3, chloroplastic from Drimys granadensis.